The following is an 810-amino-acid chain: Ecotropic viral integration site 5 protein homolog (810 aa).

The tract at residues 1 to 483 is interaction with alpha-tubulin, gamma-tubulin, BIRC5 and FBXO5; that stretch reads MVTNKMTAAF…EAESQCALKE (483 aa). Disordered stretches follow at residues 49–80 and 98–123; these read VASPSTSLHTTSSSTTLSTPALSPSSPSQLSP and TDSKSLRSVNGSRRNSGSSLVSSSSA. Over residues 51–80 the composition is skewed to low complexity; the sequence is SPSTSLHTTSSSTTLSTPALSPSSPSQLSP. Ser-102 and Ser-113 each carry phosphoserine. A compositionally biased stretch (low complexity) spans 103–123; sequence LRSVNGSRRNSGSSLVSSSSA. The tract at residues 128–693 is dimerization; sequence SHLEEDSWIL…LNKSDSNQYI (566 aa). Residues 163–348 form the Rab-GAP TBC domain; that stretch reads GIPHHFRAIV…RIFDIFMSEG (186 aa). The segment at 377–810 is targeting to the centrosomes; that stretch reads QHFQKVIPHQ…RRRESYSTTV (434 aa). Residues 406-716 adopt a coiled-coil conformation; that stretch reads KKMKKLEKEY…LRCLKGQRGF (311 aa). Residues 487 to 810 form an interaction with AURKB and INCENP region; the sequence is KVLDIEKRNN…RRRESYSTTV (324 aa). 4 positions are modified to phosphoserine: Ser-497, Ser-689, Ser-776, and Ser-778. A disordered region spans residues 756-810; the sequence is GFPLHGKSGSMSLDPAVADGSESETEDSVLETRESNQVVQKERPPRRRESYSTTV. Over residues 785–810 the composition is skewed to basic and acidic residues; it reads LETRESNQVVQKERPPRRRESYSTTV.

In terms of assembly, dimeric and monomeric. Interacts with alpha- and gamma-tubulin. Interacts with FBXO5. Interacts with the chromosome passenger complex (CPC) which is at least composed of AURKB/aurora-B, BIRC5/survivin, CDCA8/borealin and INCENP. In terms of processing, probably phosphorylated by PLK1; may be required for degradation during mitosis. Post-translationally, ubiquitinated. Degradation during prophase is ubiquitin-dependent. As to expression, expressed in various cell lines (at protein level). Expressed in a wide range of tissues including brain and adrenal.

It is found in the nucleus. The protein resides in the cytoplasm. The protein localises to the cytoskeleton. Its subcellular location is the microtubule organizing center. It localises to the centrosome. It is found in the spindle. Functions as a regulator of cell cycle progression by stabilizing the FBXO5 protein and promoting cyclin-A accumulation during interphase. May play a role in cytokinesis. The protein is Ecotropic viral integration site 5 protein homolog (EVI5) of Homo sapiens (Human).